Consider the following 447-residue polypeptide: Cytochrome P450 BJ-4 (447 aa).

C392 provides a ligand contact to heme.

The protein belongs to the cytochrome P450 family. Heme is required as a cofactor.

In terms of biological role, cytochromes P450 are a group of heme-thiolate monooxygenases. They oxidize a variety of structurally unrelated compounds, including steroids, fatty acids, and xenobiotics. In Bradyrhizobium diazoefficiens (strain JCM 10833 / BCRC 13528 / IAM 13628 / NBRC 14792 / USDA 110), this protein is Cytochrome P450 BJ-4 (cyp117).